The sequence spans 405 residues: NADH-quinone oxidoreductase subunit D (405 aa).

Belongs to the complex I 49 kDa subunit family. In terms of assembly, NDH-1 is composed of 14 different subunits. Subunits NuoB, C, D, E, F, and G constitute the peripheral sector of the complex.

Its subcellular location is the cell inner membrane. The enzyme catalyses a quinone + NADH + 5 H(+)(in) = a quinol + NAD(+) + 4 H(+)(out). In terms of biological role, NDH-1 shuttles electrons from NADH, via FMN and iron-sulfur (Fe-S) centers, to quinones in the respiratory chain. The immediate electron acceptor for the enzyme in this species is believed to be ubiquinone. Couples the redox reaction to proton translocation (for every two electrons transferred, four hydrogen ions are translocated across the cytoplasmic membrane), and thus conserves the redox energy in a proton gradient. The protein is NADH-quinone oxidoreductase subunit D of Leptospira interrogans serogroup Icterohaemorrhagiae serovar copenhageni (strain Fiocruz L1-130).